The primary structure comprises 248 residues: Probable transcriptional regulatory protein P9303_05381 (248 aa).

Belongs to the TACO1 family.

Its subcellular location is the cytoplasm. The protein is Probable transcriptional regulatory protein P9303_05381 of Prochlorococcus marinus (strain MIT 9303).